The following is a 547-amino-acid chain: Large cysteine-rich periplasmic protein OmcB, serovar C (547 aa).

An N-terminal signal peptide occupies residues 1 to 22 (MNKLIRRAVTIFAVTSVASLFA). The propeptide occupies 23–40 (SGVLETSMAESLSTNVIS). Positions 45-84 (KAKDNTSHKSKKARKNHSKETPVDRKEVAPVHESKATGPK) are disordered. The span at 52-61 (HKSKKARKNH) shows a compositional bias: basic residues. Over residues 62–79 (SKETPVDRKEVAPVHESK) the composition is skewed to basic and acidic residues.

As to quaternary structure, part of a disulfide cross-linked outer membrane complex (COMC) composed of the major outer membrane porin (MOMP), the small cysteine-rich protein (OmcA) and the large cysteine-rich periplasmic protein (OmcB).

The protein resides in the periplasm. Its function is as follows. In elementary bodies (EBs, the infectious stage, which is able to survive outside the host cell) provides the structural integrity of the outer envelope through disulfide cross-links with the small cysteine-rich protein and the major outer membrane porin. It has been described in publications as the Sarkosyl-insoluble COMC (Chlamydia outer membrane complex), and serves as the functional equivalent of peptidoglycan. This chain is Large cysteine-rich periplasmic protein OmcB, serovar C (omcB), found in Chlamydia trachomatis.